The following is a 401-amino-acid chain: Homocysteine-responsive endoplasmic reticulum-resident ubiquitin-like domain member 2 protein (401 aa).

A Ubiquitin-like domain is found at 10–89; it reads VTLIIKAPNQ…HMVHLVCASR (80 aa). The segment at 87 to 137 is disordered; the sequence is ASRSPPSSPKSSTDGESHGALASSTNSNSDHSDSTTPSPSQESLSLVAGSS. 2 stretches are compositionally biased toward low complexity: residues 88–98 and 109–126; these read SRSPPSSPKSS and SSTNSNSDHSDSTTPSPS. Residues 299 to 319 traverse the membrane as a helical segment; it reads FIMVMGAMLLVYLHQAGWFPF.

The protein localises to the membrane. In terms of biological role, could be involved in the unfolded protein response (UPR) pathway. The sequence is that of Homocysteine-responsive endoplasmic reticulum-resident ubiquitin-like domain member 2 protein (Herpud2) from Rattus norvegicus (Rat).